Consider the following 201-residue polypeptide: Transmembrane 4 L6 family member 18 (201 aa).

Over 1–9 (MGSRKCGGC) the chain is Cytoplasmic. Residues 10-30 (LSCLLIPLALWSIIVNILLYF) form a helical membrane-spanning segment. Residues 31 to 49 (PNGQTSYASSNKLTNYVWY) lie on the Extracellular side of the membrane. The helical transmembrane segment at 50-70 (FEGICFSGIMMLIVTTVLLVL) threads the bilayer. At 71–93 (ENNNNYKCCQSENCSKKYVTLLS) the chain is on the cytoplasmic side. A helical membrane pass occupies residues 94-114 (IIFSSLGIAFSGYCLVISALG). The Extracellular segment spans residues 115–157 (LVQGPYCRTLDGWEYAFEGTAGRFLTDSSIWIQCLEPAHVVEW). Residues 158–178 (NIILFSILITLSGLQVIICLI) form a helical membrane-spanning segment. The Cytoplasmic portion of the chain corresponds to 179–201 (RVVMQLSKILCGSYSVIFQPGII).

It belongs to the L6 tetraspanin family.

Its subcellular location is the membrane. The polypeptide is Transmembrane 4 L6 family member 18 (TM4SF18) (Homo sapiens (Human)).